The primary structure comprises 280 residues: DegV domain-containing protein CA_C1624 (280 aa).

The 276-residue stretch at 4–279 folds into the DegV domain; the sequence is IALITDSTSD…PGLLGVVIFK (276 aa). Threonine 60 and serine 93 together coordinate hexadecanoate.

May bind long-chain fatty acids, such as palmitate, and may play a role in lipid transport or fatty acid metabolism. The polypeptide is DegV domain-containing protein CA_C1624 (Clostridium acetobutylicum (strain ATCC 824 / DSM 792 / JCM 1419 / IAM 19013 / LMG 5710 / NBRC 13948 / NRRL B-527 / VKM B-1787 / 2291 / W)).